Reading from the N-terminus, the 299-residue chain is Very long chain fatty acid elongase 5 (299 aa).

Met1 bears the N-acetylmethionine mark. The next 6 membrane-spanning stretches (helical) occupy residues 26–46 (WFLL…LLIV), 64–84 (ILVV…CELV), 112–132 (VLRW…FFIL), 150–170 (MLNI…YFGA), 205–225 (GQLL…IWPC), and 226–246 (TFPL…IALF). The interval 275 to 299 (AAVNGHTNSFSPLENNVKPRKLRKD) is disordered. Residues 279 to 288 (GHTNSFSPLE) are compositionally biased toward polar residues. Ser285 is modified (phosphoserine).

It belongs to the ELO family. ELOVL5 subfamily. In terms of assembly, interacts with TECR.

It is found in the endoplasmic reticulum membrane. Its subcellular location is the cell projection. The protein localises to the dendrite. The catalysed reaction is a very-long-chain acyl-CoA + malonyl-CoA + H(+) = a very-long-chain 3-oxoacyl-CoA + CO2 + CoA. It carries out the reaction (6Z,9Z,12Z)-octadecatrienoyl-CoA + malonyl-CoA + H(+) = (8Z,11Z,14Z)-3-oxoeicosatrienoyl-CoA + CO2 + CoA. The enzyme catalyses (9Z,12Z,15Z)-octadecatrienoyl-CoA + malonyl-CoA + H(+) = (11Z,14Z,17Z)-3-oxoeicosatrienoyl-CoA + CO2 + CoA. It catalyses the reaction (9Z)-hexadecenoyl-CoA + malonyl-CoA + H(+) = 3-oxo-(11Z)-octadecenoyl-CoA + CO2 + CoA. The catalysed reaction is (9Z)-octadecenoyl-CoA + malonyl-CoA + H(+) = 3-oxo-(11Z)-eicosenoyl-CoA + CO2 + CoA. It carries out the reaction (11Z)-octadecenoyl-CoA + malonyl-CoA + H(+) = 3-oxo-(13Z)-eicosenoyl-CoA + CO2 + CoA. The enzyme catalyses (9Z,12Z)-octadecadienoyl-CoA + malonyl-CoA + H(+) = (11Z,14Z)-3-oxoicosa-11,14-dienoyl-CoA + CO2 + CoA. It catalyses the reaction (6Z,9Z,12Z,15Z)-octadecatetraenoyl-CoA + malonyl-CoA + H(+) = (8Z,11Z,14Z,17Z)-3-oxoicosatetraenoyl-CoA + CO2 + CoA. The catalysed reaction is (5Z,8Z,11Z,14Z)-eicosatetraenoyl-CoA + malonyl-CoA + H(+) = (7Z,10Z,13Z,16Z)-3-oxodocosatetraenoyl-CoA + CO2 + CoA. It carries out the reaction (5Z,8Z,11Z,14Z,17Z)-eicosapentaenoyl-CoA + malonyl-CoA + H(+) = 3-oxo-(7Z,10Z,13Z,16Z,19Z)-docosapentaenoyl-CoA + CO2 + CoA. It functions in the pathway lipid metabolism; polyunsaturated fatty acid biosynthesis. In terms of biological role, catalyzes the first and rate-limiting reaction of the four reactions that constitute the long-chain fatty acids elongation cycle. This endoplasmic reticulum-bound enzymatic process allows the addition of 2 carbons to the chain of long- and very long-chain fatty acids (VLCFAs) per cycle. Condensing enzyme that acts specifically toward polyunsaturated acyl-CoA with the higher activity toward C18:3(n-6) acyl-CoA. May participate in the production of monounsaturated and of polyunsaturated VLCFAs of different chain lengths that are involved in multiple biological processes as precursors of membrane lipids and lipid mediators. In conditions where the essential linoleic and alpha linoleic fatty acids are lacking it is also involved in the synthesis of Mead acid from oleic acid. The sequence is that of Very long chain fatty acid elongase 5 from Macaca fascicularis (Crab-eating macaque).